Consider the following 153-residue polypeptide: 3-hydroxyacyl-[acyl-carrier-protein] dehydratase FabZ (153 aa).

Histidine 54 is an active-site residue.

This sequence belongs to the thioester dehydratase family. FabZ subfamily.

It localises to the cytoplasm. The catalysed reaction is a (3R)-hydroxyacyl-[ACP] = a (2E)-enoyl-[ACP] + H2O. In terms of biological role, involved in unsaturated fatty acids biosynthesis. Catalyzes the dehydration of short chain beta-hydroxyacyl-ACPs and long chain saturated and unsaturated beta-hydroxyacyl-ACPs. The sequence is that of 3-hydroxyacyl-[acyl-carrier-protein] dehydratase FabZ from Chlamydia pneumoniae (Chlamydophila pneumoniae).